Reading from the N-terminus, the 314-residue chain is Hydroxyacyl-coenzyme A dehydrogenase, mitochondrial (314 aa).

The transit peptide at 1–12 (MAFATRQLVRSL) directs the protein to the mitochondrion. NAD(+) contacts are provided by residues 34-39 (GGGLMG) and Asp-57. Residues Ser-73 and Lys-80 each contribute to the CoA site. Lys-80 is subject to N6-succinyllysine. Residues Lys-81 and Lys-87 each carry the N6-acetyllysine; alternate modification. N6-succinyllysine; alternate is present on residues Lys-81 and Lys-87. Residue Glu-122 participates in NAD(+) binding. The residue at position 125 (Lys-125) is an N6-acetyllysine. Lys-127 serves as a coordination point for NAD(+). An N6-(2-hydroxyisobutyryl)lysine modification is found at Lys-127. The residue at position 136 (Lys-136) is an N6-acetyllysine; alternate. Residue Lys-136 is modified to N6-succinyllysine; alternate. NAD(+)-binding residues include Ser-149 and Asn-173. Ser-149 provides a ligand contact to CoA. Lys-179 is subject to N6-acetyllysine. An N6-acetyllysine; alternate mark is found at Lys-185, Lys-192, and Lys-202. An N6-succinyllysine; alternate mark is found at Lys-185, Lys-192, and Lys-202. At Lys-206 the chain carries N6-succinyllysine. N6-acetyllysine; alternate is present on residues Lys-212 and Lys-241. 2 positions are modified to N6-succinyllysine; alternate: Lys-212 and Lys-241. Position 305 (Lys-305) interacts with NAD(+). Position 312 is an N6-acetyllysine; alternate (Lys-312). An N6-succinyllysine; alternate modification is found at Lys-312.

The protein belongs to the 3-hydroxyacyl-CoA dehydrogenase family. As to quaternary structure, homodimer. Interacts with GLUD1; this interaction inhibits the activation of glutamate dehydrogenase 1 (GLUD1). Post-translationally, succinylation at Lys-81, adjacent to a coenzyme A binding site. Desuccinylated by SIRT5.

Its subcellular location is the mitochondrion matrix. It carries out the reaction a (3S)-3-hydroxyacyl-CoA + NAD(+) = a 3-oxoacyl-CoA + NADH + H(+). It catalyses the reaction (3S)-3-hydroxybutanoyl-CoA + NAD(+) = acetoacetyl-CoA + NADH + H(+). The enzyme catalyses (3S)-hydroxydecanoyl-CoA + NAD(+) = 3-oxodecanoyl-CoA + NADH + H(+). The catalysed reaction is (3S)-hydroxyhexadecanoyl-CoA + NAD(+) = 3-oxohexadecanoyl-CoA + NADH + H(+). It functions in the pathway lipid metabolism; fatty acid beta-oxidation. Mitochondrial fatty acid beta-oxidation enzyme that catalyzes the third step of the beta-oxidation cycle for medium and short-chain 3-hydroxy fatty acyl-CoAs (C4 to C10). Plays a role in the control of insulin secretion by inhibiting the activation of glutamate dehydrogenase 1 (GLUD1), an enzyme that has an important role in regulating amino acid-induced insulin secretion. Plays a role in the maintenance of normal spermatogenesis through the reduction of fatty acid accumulation in the testes. This chain is Hydroxyacyl-coenzyme A dehydrogenase, mitochondrial (HADH), found in Sus scrofa (Pig).